The following is a 463-amino-acid chain: Phosphoglucosamine mutase (463 aa).

Ser-102 acts as the Phosphoserine intermediate in catalysis. Mg(2+)-binding residues include Ser-102, Asp-240, Asp-242, and Asp-244. Ser-102 is subject to Phosphoserine.

The protein belongs to the phosphohexose mutase family. Mg(2+) is required as a cofactor. In terms of processing, activated by phosphorylation.

The enzyme catalyses alpha-D-glucosamine 1-phosphate = D-glucosamine 6-phosphate. Its function is as follows. Catalyzes the conversion of glucosamine-6-phosphate to glucosamine-1-phosphate. The chain is Phosphoglucosamine mutase from Mycobacterium leprae (strain Br4923).